Here is a 93-residue protein sequence, read N- to C-terminus: UPF0297 protein PEPE_1262 (93 aa).

It belongs to the UPF0297 family.

The protein is UPF0297 protein PEPE_1262 of Pediococcus pentosaceus (strain ATCC 25745 / CCUG 21536 / LMG 10740 / 183-1w).